The primary structure comprises 418 residues: UDP-N-acetylglucosamine 1-carboxyvinyltransferase (418 aa).

Phosphoenolpyruvate is bound at residue 22-23 (KN). Arg-92 provides a ligand contact to UDP-N-acetyl-alpha-D-glucosamine. Cys-116 functions as the Proton donor in the catalytic mechanism. Cys-116 is modified (2-(S-cysteinyl)pyruvic acid O-phosphothioketal). UDP-N-acetyl-alpha-D-glucosamine is bound by residues 121–125 (RPVDQ), Asp-306, and Ile-328.

This sequence belongs to the EPSP synthase family. MurA subfamily.

It is found in the cytoplasm. The catalysed reaction is phosphoenolpyruvate + UDP-N-acetyl-alpha-D-glucosamine = UDP-N-acetyl-3-O-(1-carboxyvinyl)-alpha-D-glucosamine + phosphate. The protein operates within cell wall biogenesis; peptidoglycan biosynthesis. Functionally, cell wall formation. Adds enolpyruvyl to UDP-N-acetylglucosamine. This is UDP-N-acetylglucosamine 1-carboxyvinyltransferase from Acinetobacter baylyi (strain ATCC 33305 / BD413 / ADP1).